Reading from the N-terminus, the 253-residue chain is Probable U3 small nucleolar RNA-associated protein 11 (253 aa).

The interval 1 to 21 (MAAAFRKAVKSRQREYRERSQ) is disordered. Glycyl lysine isopeptide (Lys-Gly) (interchain with G-Cter in SUMO2) cross-links involve residues K74, K83, and K86. A Phosphothreonine modification is found at T90. Glycyl lysine isopeptide (Lys-Gly) (interchain with G-Cter in SUMO2) cross-links involve residues K103, K120, K143, K144, K180, K211, K218, K235, and K236. Residue S241 is modified to Phosphoserine. K246 participates in a covalent cross-link: Glycyl lysine isopeptide (Lys-Gly) (interchain with G-Cter in SUMO2).

The protein belongs to the UTP11 family. As to quaternary structure, part of the small subunit (SSU) processome, composed of more than 70 proteins and the RNA chaperone small nucleolar RNA (snoRNA) U3.

Its subcellular location is the nucleus. It is found in the nucleolus. Its function is as follows. Part of the small subunit (SSU) processome, first precursor of the small eukaryotic ribosomal subunit. During the assembly of the SSU processome in the nucleolus, many ribosome biogenesis factors, an RNA chaperone and ribosomal proteins associate with the nascent pre-rRNA and work in concert to generate RNA folding, modifications, rearrangements and cleavage as well as targeted degradation of pre-ribosomal RNA by the RNA exosome. Involved in nucleolar processing of pre-18S ribosomal RNA. This is Probable U3 small nucleolar RNA-associated protein 11 from Rattus norvegicus (Rat).